The sequence spans 113 residues: Meiotically up-regulated gene 98 protein, mitochondrial (113 aa).

The protein localises to the mitochondrion. Its function is as follows. Has a role in meiosis. This is Meiotically up-regulated gene 98 protein, mitochondrial (mug98) from Schizosaccharomyces pombe (strain 972 / ATCC 24843) (Fission yeast).